We begin with the raw amino-acid sequence, 196 residues long: MKKMMILSALALFSSSLFAANLTLQKEITPQIVNGEGVTLQEVHNGNRIELKPGHNQIAVTIGQIVFEDGKRRKFDSQPLLLEFVAKPEQALTLKYGKFRTIDDAKKFENNPTVHLTDAQGNPVAFTMVQLYKGGLQGFRDYEREVADYNAQKAQKADSAPLVNHDPKAMDLKTAFKEMTRQEQQAFMQWAMQNLK.

The first 19 residues, M1–A19, serve as a signal peptide directing secretion.

The protein belongs to the UPF0319 family.

The sequence is that of UPF0319 protein VV1_0237 from Vibrio vulnificus (strain CMCP6).